Consider the following 151-residue polypeptide: uncharacterized protein (151 aa).

This is an uncharacterized protein from Gallid herpesvirus 2 (strain GA) (GaHV-2).